We begin with the raw amino-acid sequence, 1649 residues long: DNA-directed RNA polymerase subunit beta' (1649 aa).

Residues C63, C65, C78, and C81 each coordinate Zn(2+). Mg(2+) contacts are provided by D747, D749, and D751. Residues C1078, C1269, C1276, and C1279 each contribute to the Zn(2+) site.

The protein belongs to the RNA polymerase beta' chain family. In terms of assembly, the RNAP catalytic core consists of 2 alpha, 1 beta, 1 beta' and 1 omega subunit. When a sigma factor is associated with the core the holoenzyme is formed, which can initiate transcription. Mg(2+) is required as a cofactor. Zn(2+) serves as cofactor.

The enzyme catalyses RNA(n) + a ribonucleoside 5'-triphosphate = RNA(n+1) + diphosphate. Its function is as follows. DNA-dependent RNA polymerase catalyzes the transcription of DNA into RNA using the four ribonucleoside triphosphates as substrates. This Thermosipho melanesiensis (strain DSM 12029 / CIP 104789 / BI429) protein is DNA-directed RNA polymerase subunit beta'.